The chain runs to 151 residues: Cytochrome c oxidase subunit 5B, mitochondrial (151 aa).

The transit peptide at 1–17 (MLRTSLTKGARLTGTRF) directs the protein to the mitochondrion. Residues 18–85 (VQTKALSKAT…EWGPRRPVHG (68 aa)) lie on the Mitochondrial matrix side of the membrane. Residues 86-108 (KGDVAFITKGVFLGLGISFGLFG) form a helical membrane-spanning segment. Topologically, residues 109 to 151 (LVRLLANPETPKTMNREWQLKSDEYLKSKNANPWGGYSQVQSK) are mitochondrial intermembrane.

Belongs to the cytochrome c oxidase IV family. As to quaternary structure, component of the cytochrome c oxidase (complex IV, CIV), a multisubunit enzyme composed of 12 subunits. The complex is composed of a catalytic core of 3 subunits COX1, COX2 and COX3, encoded in the mitochondrial DNA, and 9 supernumerary subunits COX4, COX5A (or COX5B), COX6, COX7, COX8, COX9, COX12, COX13 and COX26, which are encoded in the nuclear genome. COX5A is the predominant subunit V during aerobic/normoxic growth, it gets replaced by COX5B under anaerobic/hypoxic conditions. The complex exists as a monomer or a dimer and forms supercomplexes (SCs) in the inner mitochondrial membrane with a dimer of ubiquinol-cytochrome c oxidoreductase (cytochrome b-c1 complex, complex III, CIII), resulting in 2 different assemblies (supercomplexes III(2)IV and III(2)IV(2)).

The protein resides in the mitochondrion inner membrane. It functions in the pathway energy metabolism; oxidative phosphorylation. Component of the cytochrome c oxidase, the last enzyme in the mitochondrial electron transport chain which drives oxidative phosphorylation. The respiratory chain contains 3 multisubunit complexes succinate dehydrogenase (complex II, CII), ubiquinol-cytochrome c oxidoreductase (cytochrome b-c1 complex, complex III, CIII) and cytochrome c oxidase (complex IV, CIV), that cooperate to transfer electrons derived from NADH and succinate to molecular oxygen, creating an electrochemical gradient over the inner membrane that drives transmembrane transport and the ATP synthase. Cytochrome c oxidase is the component of the respiratory chain that catalyzes the reduction of oxygen to water. Electrons originating from reduced cytochrome c in the intermembrane space (IMS) are transferred via the dinuclear copper A center (CU(A)) of COX2 and heme A of COX1 to the active site in COX1, a binuclear center (BNC) formed by heme A3 and copper B (CU(B)). The BNC reduces molecular oxygen to 2 water molecules using 4 electrons from cytochrome c in the IMS and 4 protons from the mitochondrial matrix. This chain is Cytochrome c oxidase subunit 5B, mitochondrial (COX5B), found in Saccharomyces cerevisiae (strain ATCC 204508 / S288c) (Baker's yeast).